A 601-amino-acid chain; its full sequence is Glutathione-regulated potassium-efflux system protein KefB (601 aa).

13 helical membrane-spanning segments follow: residues 4–24 (SDFL…VPLA), 29–49 (IGAV…GLGF), 55–75 (EILH…GLEL), 87–107 (IFGV…GLLM), 115–135 (AAVV…LQLM), 152–172 (VLLF…LLAG), 177–197 (HFDW…LIGG), 207–227 (FIAA…LVLG), 230–250 (LFMD…GVLL), 268–288 (GLLL…GVLY), 291–311 (LLWV…VLYL), 324–344 (MQFA…FSTA), and 356–376 (ALLL…MKLV). Residues 400–519 (KPQVIVVGFG…AGVTQFSRET (120 aa)) enclose the RCK N-terminal domain.

It belongs to the monovalent cation:proton antiporter 2 (CPA2) transporter (TC 2.A.37) family. KefB subfamily. In terms of assembly, interacts with the regulatory subunit KefG.

Its subcellular location is the cell inner membrane. In terms of biological role, pore-forming subunit of a potassium efflux system that confers protection against electrophiles. Catalyzes K(+)/H(+) antiport. The sequence is that of Glutathione-regulated potassium-efflux system protein KefB from Shigella sonnei (strain Ss046).